The primary structure comprises 567 residues: tRNA (uracil-O(2)-)-methyltransferase (567 aa).

Position 107 is a phosphoserine (serine 107).

The protein belongs to the TRM44 family.

Its subcellular location is the cytoplasm. It carries out the reaction uridine(44) in tRNA(Ser) + S-adenosyl-L-methionine = 2'-O-methyluridine(44) in tRNA(Ser) + S-adenosyl-L-homocysteine + H(+). In terms of biological role, tRNA (uracil-O(2)-)-methyltransferase, which catalyzes the formation of O(2)-methyluracil at position 44 (Um44) in tRNA(Ser). In Saccharomyces cerevisiae (strain ATCC 204508 / S288c) (Baker's yeast), this protein is tRNA (uracil-O(2)-)-methyltransferase (TRM44).